The following is a 268-amino-acid chain: MALNFPNIDPVIVKFGPFDIFGQTFEPALRWYGFTYLVGFVAAMWLLNRQADRSNGLWSREQVSDLLFYGFLGVILGGRIGYVLFYHFDYFLASPMYLFKISEGGMSFHGGLMGVITAMIYIAWKQKRTFFAVADMVAPVVPIGLGAGRIGNFINGELWGRVTDVPWAMVFPSGGPEPRHPSQLYQFALEGVALFLLLYWFSKRTKKVGAVSGMFLLGYGIFRVIVETVRQPDAQLGLYWGFMTMGQILSVPMVLFGLYLILRPEGKQ.

Helical transmembrane passes span 27 to 47, 66 to 86, 104 to 124, 130 to 150, 181 to 201, 208 to 228, and 242 to 262; these read PALRWYGFTYLVGFVAAMWLL, LLFYGFLGVILGGRIGYVLFY, GGMSFHGGLMGVITAMIYIAW, FFAVADMVAPVVPIGLGAGRI, PSQLYQFALEGVALFLLLYWF, VGAVSGMFLLGYGIFRVIVET, and FMTMGQILSVPMVLFGLYLIL. Arginine 149 serves as a coordination point for a 1,2-diacyl-sn-glycero-3-phospho-(1'-sn-glycerol).

The protein belongs to the Lgt family.

The protein resides in the cell inner membrane. It carries out the reaction L-cysteinyl-[prolipoprotein] + a 1,2-diacyl-sn-glycero-3-phospho-(1'-sn-glycerol) = an S-1,2-diacyl-sn-glyceryl-L-cysteinyl-[prolipoprotein] + sn-glycerol 1-phosphate + H(+). Its pathway is protein modification; lipoprotein biosynthesis (diacylglyceryl transfer). In terms of biological role, catalyzes the transfer of the diacylglyceryl group from phosphatidylglycerol to the sulfhydryl group of the N-terminal cysteine of a prolipoprotein, the first step in the formation of mature lipoproteins. This is Phosphatidylglycerol--prolipoprotein diacylglyceryl transferase from Shewanella sp. (strain MR-4).